The sequence spans 611 residues: Dihydroxy-acid dehydratase (611 aa).

D81 is a binding site for Mg(2+). A [2Fe-2S] cluster-binding site is contributed by C122. Mg(2+) is bound by residues D123 and K124. K124 carries the N6-carboxylysine modification. Residue C195 coordinates [2Fe-2S] cluster. A Mg(2+)-binding site is contributed by E491. The active-site Proton acceptor is S517.

Belongs to the IlvD/Edd family. In terms of assembly, homodimer. The cofactor is [2Fe-2S] cluster. Requires Mg(2+) as cofactor.

It carries out the reaction (2R)-2,3-dihydroxy-3-methylbutanoate = 3-methyl-2-oxobutanoate + H2O. The enzyme catalyses (2R,3R)-2,3-dihydroxy-3-methylpentanoate = (S)-3-methyl-2-oxopentanoate + H2O. Its pathway is amino-acid biosynthesis; L-isoleucine biosynthesis; L-isoleucine from 2-oxobutanoate: step 3/4. It participates in amino-acid biosynthesis; L-valine biosynthesis; L-valine from pyruvate: step 3/4. In terms of biological role, functions in the biosynthesis of branched-chain amino acids. Catalyzes the dehydration of (2R,3R)-2,3-dihydroxy-3-methylpentanoate (2,3-dihydroxy-3-methylvalerate) into 2-oxo-3-methylpentanoate (2-oxo-3-methylvalerate) and of (2R)-2,3-dihydroxy-3-methylbutanoate (2,3-dihydroxyisovalerate) into 2-oxo-3-methylbutanoate (2-oxoisovalerate), the penultimate precursor to L-isoleucine and L-valine, respectively. This chain is Dihydroxy-acid dehydratase, found in Brucella melitensis biotype 1 (strain ATCC 23456 / CCUG 17765 / NCTC 10094 / 16M).